Consider the following 922-residue polypeptide: Coronin-7 (922 aa).

WD repeat units lie at residues 75–115 (CHSD…EALP), 124–163 (PEEL…HLTE), 166–205 (AHKD…QASQ), and 209–253 (AHEN…SALA). The disordered stretch occupies residues 386 to 462 (NPAHRPHPRF…TSPSQRSLQS (77 aa)). Residues 423-456 (SEGFSSPSSLVSPSTPSSLGLSLSSTSGIGTSPS) are compositionally biased toward low complexity. A phosphoserine mark is found at Ser459 and Ser462. A Glycyl lysine isopeptide (Lys-Gly) (interchain with G-Cter in ubiquitin) cross-link involves residue Lys469. WD repeat units lie at residues 539 to 579 (QNGA…LKNV), 589 to 629 (GHTE…EQLR), 632 to 671 (GHQD…LPLQ), and 725 to 765 (DVAP…PFFL). The tract at residues 854–922 (LQPPGMTPVS…FEGVDEDEWD (69 aa)) is disordered. Thr874 is modified (phosphothreonine). The span at 881-893 (LEEKSDQQKKEEL) shows a compositional bias: basic and acidic residues. At Ser912 the chain carries Phosphoserine.

It belongs to the WD repeat coronin family. Interacts with clathrin adapter AP1 complex. This interaction takes place at Golgi membranes and not AP1-positive endosomal membranes. Interacts (when ubiquitinated at Lys-469) with EPS15. Post-translationally, the membrane-associated form is phosphorylated on tyrosine residues. In terms of processing, ubiquitinated via 'Lys-33'-linked ubiquitin chains by the BCR(KLHL20) E3 ubiquitin ligase complex: 'Lys-33'-linked ubiquitination promotes interaction with EPS15 and facilitates actin polymerization at the trans-Golgi network, thereby facilitating post-Golgi trafficking. Deubiquitinated by ZRANB1/TRABID.

It localises to the golgi apparatus membrane. The protein localises to the golgi apparatus. Its subcellular location is the trans-Golgi network. It is found in the cytoplasmic vesicle. The protein resides in the cytoplasm. It localises to the cytosol. F-actin regulator involved in anterograde Golgi to endosome transport: upon ubiquitination via 'Lys-33'-linked ubiquitin chains by the BCR(KLHL20) E3 ubiquitin ligase complex, interacts with EPS15 and localizes to the trans-Golgi network, where it promotes actin polymerization, thereby facilitating post-Golgi trafficking. May play a role in the maintenance of the Golgi apparatus morphology. This Rattus norvegicus (Rat) protein is Coronin-7 (Coro7).